The following is a 944-amino-acid chain: Protein translocase subunit SecA (944 aa).

ATP is bound by residues Gln-77, 95–99 (GEGKT), and Asp-484. The segment at 920–944 (EQEKQTKKKKKKKPHDDETTKVKIG) is disordered. Basic and acidic residues predominate over residues 933 to 944 (PHDDETTKVKIG).

It belongs to the SecA family. As to quaternary structure, monomer and homodimer. Part of the essential Sec protein translocation apparatus which comprises SecA, SecYEG and auxiliary proteins SecDF. Other proteins may also be involved.

It is found in the cell membrane. The protein localises to the cytoplasm. The catalysed reaction is ATP + H2O + cellular proteinSide 1 = ADP + phosphate + cellular proteinSide 2.. In terms of biological role, part of the Sec protein translocase complex. Interacts with the SecYEG preprotein conducting channel. Has a central role in coupling the hydrolysis of ATP to the transfer of proteins into and across the cell membrane, serving as an ATP-driven molecular motor driving the stepwise translocation of polypeptide chains across the membrane. The polypeptide is Protein translocase subunit SecA (Mycoplasma capricolum subsp. capricolum (strain California kid / ATCC 27343 / NCTC 10154)).